The primary structure comprises 713 residues: MSGVALGIEIVSVFFLALFLLHRYGDFKKQHKLVIVGTLLAWYLCFLIVFIIPLDVSTTIYNRCVARHAVTPAPSNITVLSPTPGIVSNTTAQNHLPSADKLRSSDNSLEECSKPWSYIPRGIMPIFWRVVYWTSQFLTWILMPFMQSYARSGGFSITGKIKTALIENAIYYGTYLLIFGALLIYVAVNPNLHLEWYQLQTIGIAAANTWGLFLLVLLMGYGLVEIPRSQWNGAKKGYLLMKTYFKAAKLMTEKADAEETLEDVMEEVRKVNECIKYNHPLRKCVDTILKKCPAEYQEKMGRNMDDYEDFEEKNISYPSEKTLVKLHKQVIYAVQRHRRTQVQWSILLEQAFHLEDVAKNETSAAKQFVHTFPHQEPESWIMRRLYTPTIEWYWECLLRPWCSRILAVILALFSTVVVWSECTFFSAKPVLSLFAVFIQQAEQTHNYIYVEVVCFLSIFFLSICVYSTVFRIRVFNYYYLASHHQTDAYSLLFSGMLFCRLTPPLCLNFLGLTHMDVSISHQNIEPTAYTSIMGSLRVLPLIADVFYIYYPMLVLILCIATYFSLGTRCLNLLGFQQFMGDNDMTSDLTDEGKELIKREKRKRQRLEDGETRRREWKERYPTNREDTSRNRSVNSDQKEPTYTEMTTNRSSKYTRASNRTERDRIELLQDAEPLDFNADTFNDDPLDSESGRYQPGGRYLSMSQSNSRIFDDV.

The Extracellular portion of the chain corresponds to 1 to 3; sequence MSG. A helical transmembrane segment spans residues 4–21; the sequence is VALGIEIVSVFFLALFLL. Topologically, residues 22–32 are cytoplasmic; it reads HRYGDFKKQHK. The chain crosses the membrane as a helical span at residues 33 to 53; the sequence is LVIVGTLLAWYLCFLIVFIIP. The Extracellular portion of the chain corresponds to 54-122; it reads LDVSTTIYNR…SKPWSYIPRG (69 aa). Asn76 and Asn89 each carry an N-linked (GlcNAc...) asparagine glycan. The chain crosses the membrane as a helical span at residues 123-143; that stretch reads IMPIFWRVVYWTSQFLTWILM. Residues 144-167 are Cytoplasmic-facing; sequence PFMQSYARSGGFSITGKIKTALIE. A helical membrane pass occupies residues 168 to 188; it reads NAIYYGTYLLIFGALLIYVAV. The Extracellular portion of the chain corresponds to 189-203; it reads NPNLHLEWYQLQTIG. The helical transmembrane segment at 204-224 threads the bilayer; it reads IAAANTWGLFLLVLLMGYGLV. Topologically, residues 225 to 404 are cytoplasmic; it reads EIPRSQWNGA…ECLLRPWCSR (180 aa). Positions 246–314 form a coiled coil; that stretch reads KAAKLMTEKA…DDYEDFEEKN (69 aa). Residues 405–425 traverse the membrane as a helical segment; it reads ILAVILALFSTVVVWSECTFF. Residues 426–449 are Extracellular-facing; sequence SAKPVLSLFAVFIQQAEQTHNYIY. The chain crosses the membrane as a helical span at residues 450–470; the sequence is VEVVCFLSIFFLSICVYSTVF. Topologically, residues 471-490 are cytoplasmic; it reads RIRVFNYYYLASHHQTDAYS. Residues 491–511 traverse the membrane as a helical segment; the sequence is LLFSGMLFCRLTPPLCLNFLG. At 512 to 538 the chain is on the extracellular side; the sequence is LTHMDVSISHQNIEPTAYTSIMGSLRV. A helical transmembrane segment spans residues 539 to 559; that stretch reads LPLIADVFYIYYPMLVLILCI. Residues 560 to 713 are Cytoplasmic-facing; that stretch reads ATYFSLGTRC…QSNSRIFDDV (154 aa). Positions 587-620 form a coiled coil; the sequence is DLTDEGKELIKREKRKRQRLEDGETRRREWKERY. The segment at 600-713 is disordered; sequence KRKRQRLEDG…QSNSRIFDDV (114 aa). Positions 605–629 are enriched in basic and acidic residues; that stretch reads RLEDGETRRREWKERYPTNREDTSR. The segment covering 643-657 has biased composition (polar residues); sequence TEMTTNRSSKYTRAS. Residues 658 to 667 show a composition bias toward basic and acidic residues; the sequence is NRTERDRIEL. Polar residues predominate over residues 701 to 713; the sequence is SMSQSNSRIFDDV.

Belongs to the LIMR family.

It is found in the cell membrane. Functionally, may associate with G-protein coupled receptors and regulate downstream signaling pathways. The chain is G-protein coupled receptor-associated protein LMBRD2 (lmbrd2) from Xenopus laevis (African clawed frog).